We begin with the raw amino-acid sequence, 210 residues long: Large ribosomal subunit protein uL4 (210 aa).

Residues 41–51 are compositionally biased toward polar residues; that stretch reads ANARQGTQSTK. Disordered stretches follow at residues 41 to 60 and 67 to 98; these read ANARQGTQSTKTRGEVQGSS and KGTGNARMGTNRSPVRRHGGVAFGPRPRDFSK.

The protein belongs to the universal ribosomal protein uL4 family. As to quaternary structure, part of the 50S ribosomal subunit.

One of the primary rRNA binding proteins, this protein initially binds near the 5'-end of the 23S rRNA. It is important during the early stages of 50S assembly. It makes multiple contacts with different domains of the 23S rRNA in the assembled 50S subunit and ribosome. Its function is as follows. Forms part of the polypeptide exit tunnel. This chain is Large ribosomal subunit protein uL4, found in Dehalococcoides mccartyi (strain ATCC BAA-2266 / KCTC 15142 / 195) (Dehalococcoides ethenogenes (strain 195)).